The primary structure comprises 360 residues: Peptide chain release factor 1 (360 aa).

Position 233 is an N5-methylglutamine (Gln233). Residues 286 to 305 (NEIAQERKSQVGTGDRSERI) form a disordered region.

The protein belongs to the prokaryotic/mitochondrial release factor family. Methylated by PrmC. Methylation increases the termination efficiency of RF1.

The protein localises to the cytoplasm. In terms of biological role, peptide chain release factor 1 directs the termination of translation in response to the peptide chain termination codons UAG and UAA. The protein is Peptide chain release factor 1 of Acetivibrio thermocellus (strain ATCC 27405 / DSM 1237 / JCM 9322 / NBRC 103400 / NCIMB 10682 / NRRL B-4536 / VPI 7372) (Clostridium thermocellum).